Reading from the N-terminus, the 431-residue chain is 23S rRNA (uracil(1939)-C(5))-methyltransferase RlmD (431 aa).

The TRAM domain occupies arginine 10–arginine 68. Cysteine 81, cysteine 87, cysteine 90, and cysteine 161 together coordinate [4Fe-4S] cluster. S-adenosyl-L-methionine is bound by residues glutamine 264, phenylalanine 293, asparagine 298, glutamate 314, asparagine 341, and aspartate 362. Cysteine 388 serves as the catalytic Nucleophile.

It belongs to the class I-like SAM-binding methyltransferase superfamily. RNA M5U methyltransferase family. RlmD subfamily.

It carries out the reaction uridine(1939) in 23S rRNA + S-adenosyl-L-methionine = 5-methyluridine(1939) in 23S rRNA + S-adenosyl-L-homocysteine + H(+). Catalyzes the formation of 5-methyl-uridine at position 1939 (m5U1939) in 23S rRNA. This is 23S rRNA (uracil(1939)-C(5))-methyltransferase RlmD from Salmonella choleraesuis (strain SC-B67).